Reading from the N-terminus, the 346-residue chain is Selenoprotein V (346 aa).

Disordered stretches follow at residues Met1–Arg40 and Leu151–Thr206. Positions Leu151–Pro162 are enriched in pro residues. The segment at residues Cys270–Sec273 is a cross-link (cysteinyl-selenocysteine (Cys-Sec); redox-active). Position 273 (Sec273) is a non-standard amino acid, selenocysteine.

It belongs to the SelWTH family. In terms of processing, truncated SELENOV proteins produced by failed UGA/Sec decoding are ubiquitinated by the CRL2(APPBP2) complex, which recognizes the glycine (Gly) at the C-terminus of truncated SELENOV proteins. In terms of tissue distribution, testis specific.

May be involved in a redox-related process. This is Selenoprotein V from Homo sapiens (Human).